The chain runs to 367 residues: Alanine racemase (367 aa).

K35 functions as the Proton acceptor; specific for D-alanine in the catalytic mechanism. K35 is modified (N6-(pyridoxal phosphate)lysine). Residue R130 participates in substrate binding. The Proton acceptor; specific for L-alanine role is filled by Y259. Position 307 (M307) interacts with substrate.

The protein belongs to the alanine racemase family. Pyridoxal 5'-phosphate is required as a cofactor.

It carries out the reaction L-alanine = D-alanine. It participates in amino-acid biosynthesis; D-alanine biosynthesis; D-alanine from L-alanine: step 1/1. Functionally, catalyzes the interconversion of L-alanine and D-alanine. May also act on other amino acids. This Delftia acidovorans (strain DSM 14801 / SPH-1) protein is Alanine racemase (alr).